Reading from the N-terminus, the 251-residue chain is Flap endonuclease Xni (251 aa).

Aspartate 104 is a binding site for Mg(2+). Positions 160–249 (VLPQQLPDYW…IDGNLQQLRL (90 aa)) constitute a 5'-3' exonuclease domain. 5 residues coordinate K(+): leucine 171, alanine 172, proline 180, valine 182, and isoleucine 185. The interaction with DNA stretch occupies residues 184-189 (GIGPKS).

It belongs to the Xni family. The cofactor is Mg(2+). It depends on K(+) as a cofactor.

Its function is as follows. Has flap endonuclease activity. During DNA replication, flap endonucleases cleave the 5'-overhanging flap structure that is generated by displacement synthesis when DNA polymerase encounters the 5'-end of a downstream Okazaki fragment. The polypeptide is Flap endonuclease Xni (Citrobacter koseri (strain ATCC BAA-895 / CDC 4225-83 / SGSC4696)).